The sequence spans 467 residues: MPTQRWAPGTQCMTKCENSRPKPGELAFRKGDMVTILEACEDKSWYRAKHHSSGQEGLLAAAALRQREALSTDPKLSLMPWFHGKISGQEAIQQLQPPEDGLFLVRESARHPGDYVLCVSFGRDVIHYRVLHRDGHLTIDEAVCFCNLMDMVEHYTRDKGAICTKLVKPKRKQGAKSAEEELAKAGWLLDLQHLTLGAQIGEGEFGAVLQGEYLGQKVAVKNIKCDVTAQAFLDETAVMTKLQHRNLVRLLGVILHHGLYIVMEHVSKGNLVNFLRTRGRALVSTSQLLQFALHVAEGMEYLESKKLVHRDLAARNILVSEDLVAKVSDFGLAKAELRKGLDSSRLPVKWTAPEALKNGRFSSKSDVWSFGVLLWEVFSYGRAPYPKMSLKEVSEAVEKGYRMEPPDSCPGPVHTLMGSCWEAEPSRRPPFRKIVEKLGRELRSVGVAAPAGGQEAEGSAPTRSQDP.

Positions 1–20 (MPTQRWAPGTQCMTKCENSR) are disordered. The 63-residue stretch at 7-69 (APGTQCMTKC…AAAALRQREA (63 aa)) folds into the SH3 domain. One can recognise an SH2 domain in the interval 81 to 170 (WFHGKISGQE…AICTKLVKPK (90 aa)). In terms of domain architecture, Protein kinase spans 194 to 443 (LTLGAQIGEG…IVEKLGRELR (250 aa)). Residues 200–208 (IGEGEFGAV) and Lys-221 contribute to the ATP site. Asp-311 functions as the Proton acceptor in the catalytic mechanism. Positions 445 to 467 (VGVAAPAGGQEAEGSAPTRSQDP) are disordered.

This sequence belongs to the protein kinase superfamily. Tyr protein kinase family. CSK subfamily. Interacts with KIT. In terms of tissue distribution, enriched in lymphoid tissues.

The protein localises to the cytoplasm. Its subcellular location is the membrane. It catalyses the reaction L-tyrosyl-[protein] + ATP = O-phospho-L-tyrosyl-[protein] + ADP + H(+). Its function is as follows. Could play a significant role in the signal transduction of hematopoietic cells. May regulate tyrosine kinase activity of SRC-family members in brain. In Rattus norvegicus (Rat), this protein is Megakaryocyte-associated tyrosine-protein kinase (Matk).